Consider the following 321-residue polypeptide: tRNA dimethylallyltransferase (321 aa).

Position 25 to 32 (25 to 32 (GPTASGKS)) interacts with ATP. 27–32 (TASGKS) contributes to the substrate binding site. The interaction with substrate tRNA stretch occupies residues 50-53 (DSMQ).

It belongs to the IPP transferase family. In terms of assembly, monomer. Requires Mg(2+) as cofactor.

It catalyses the reaction adenosine(37) in tRNA + dimethylallyl diphosphate = N(6)-dimethylallyladenosine(37) in tRNA + diphosphate. Its function is as follows. Catalyzes the transfer of a dimethylallyl group onto the adenine at position 37 in tRNAs that read codons beginning with uridine, leading to the formation of N6-(dimethylallyl)adenosine (i(6)A). The polypeptide is tRNA dimethylallyltransferase (Rhodopseudomonas palustris (strain ATCC BAA-98 / CGA009)).